The following is an 849-amino-acid chain: Envelope glycoprotein gp160 (849 aa).

The first 31 residues, Met-1 to Asp-31, serve as a signal peptide directing secretion. The Extracellular segment spans residues Asn-32 to Ile-670. Cys-53 and Cys-73 are joined by a disulfide. N-linked (GlcNAc...) asparagine; by host glycans are attached at residues Asn-87, Asn-129, Asn-137, Asn-142, Asn-153, Asn-185, Asn-195, Asn-232, Asn-239, Asn-260, Asn-274, Asn-287, Asn-299, Asn-329, Asn-341, Asn-354, and Asn-358. 5 disulfides stabilise this stretch: Cys-118–Cys-203, Cys-125–Cys-194, Cys-130–Cys-154, Cys-216–Cys-245, and Cys-226–Cys-237. The segment at Cys-130 to Asn-153 is V1. Residues Cys-154–Cys-194 form a V2 region. Residues Cys-294 to His-327 are V3. A disulfide bridge links Cys-294 with Cys-328. A CD4-binding loop region spans residues Ser-360–His-370. 2 disulfide bridges follow: Cys-374-Cys-430 and Cys-381-Cys-403. The V4 stretch occupies residues Cys-381 to Cys-403. N-linked (GlcNAc...) asparagine; by host glycans are attached at residues Asn-382, Asn-390, Asn-396, Asn-433, and Asn-447. V5 regions lie at residues Asn-446–Gly-457 and Asp-448–Gly-457. The interval Ala-498–Ala-518 is fusion peptide. Residues Lys-560 to Leu-578 are immunosuppression. Cys-584 and Cys-590 form a disulfide bridge. N-linked (GlcNAc...) asparagine; by host glycans are attached at residues Asn-597, Asn-602, Asn-611, and Asn-623. A coiled-coil region spans residues Arg-619–Ala-653. Positions Ala-648–Arg-669 are MPER; binding to GalCer. A helical transmembrane segment spans residues Phe-671 to Val-691. Topologically, residues Asn-692–Leu-849 are cytoplasmic. The YXXL motif; contains endocytosis signal signature appears at Tyr-698–Leu-701. The tract at residues His-709–Asp-729 is disordered. A lipid anchor (S-palmitoyl cysteine; by host) is attached at Cys-750. Positions Leu-848–Leu-849 match the Di-leucine internalization motif motif.

Belongs to the HIV-1 env protein family. In terms of assembly, the mature envelope protein (Env) consists of a homotrimer of non-covalently associated gp120-gp41 heterodimers. The resulting complex protrudes from the virus surface as a spike. There seems to be as few as 10 spikes on the average virion. Interacts with host CD4, CCR5 and CXCR4. Gp120 also interacts with the C-type lectins CD209/DC-SIGN and CLEC4M/DC-SIGNR (collectively referred to as DC-SIGN(R)). Gp120 and gp41 interact with GalCer. Gp120 interacts with host ITGA4/ITGB7 complex; on CD4+ T-cells, this interaction results in rapid activation of integrin ITGAL/LFA-1, which facilitates efficient cell-to-cell spreading of HIV-1. Gp120 interacts with cell-associated heparan sulfate; this interaction increases virus infectivity on permissive cells and may be involved in infection of CD4- cells. As to quaternary structure, the mature envelope protein (Env) consists of a homotrimer of non-covalently associated gp120-gp41 heterodimers. The resulting complex protrudes from the virus surface as a spike. There seems to be as few as 10 spikes on the average virion. In terms of processing, highly glycosylated by host. The high number of glycan on the protein is reffered to as 'glycan shield' because it contributes to hide protein sequence from adaptive immune system. Palmitoylation of the transmembrane protein and of Env polyprotein (prior to its proteolytic cleavage) is essential for their association with host cell membrane lipid rafts. Palmitoylation is therefore required for envelope trafficking to classical lipid rafts, but not for viral replication. Post-translationally, specific enzymatic cleavages in vivo yield mature proteins. Envelope glycoproteins are synthesized as an inactive precursor that is heavily N-glycosylated and processed likely by host cell furin in the Golgi to yield the mature SU and TM proteins. The cleavage site between SU and TM requires the minimal sequence [KR]-X-[KR]-R. About 2 of the 9 disulfide bonds of gp41 are reduced by P4HB/PDI, following binding to CD4 receptor.

It is found in the virion membrane. The protein localises to the host cell membrane. The protein resides in the host endosome membrane. Its function is as follows. Oligomerizes in the host endoplasmic reticulum into predominantly trimers. In a second time, gp160 transits in the host Golgi, where glycosylation is completed. The precursor is then proteolytically cleaved in the trans-Golgi and thereby activated by cellular furin or furin-like proteases to produce gp120 and gp41. Attaches the virus to the host lymphoid cell by binding to the primary receptor CD4. This interaction induces a structural rearrangement creating a high affinity binding site for a chemokine coreceptor like CXCR4 and/or CCR5. Acts as a ligand for CD209/DC-SIGN and CLEC4M/DC-SIGNR, which are respectively found on dendritic cells (DCs), and on endothelial cells of liver sinusoids and lymph node sinuses. These interactions allow capture of viral particles at mucosal surfaces by these cells and subsequent transmission to permissive cells. HIV subverts the migration properties of dendritic cells to gain access to CD4+ T-cells in lymph nodes. Virus transmission to permissive T-cells occurs either in trans (without DCs infection, through viral capture and transmission), or in cis (following DCs productive infection, through the usual CD4-gp120 interaction), thereby inducing a robust infection. In trans infection, bound virions remain infectious over days and it is proposed that they are not degraded, but protected in non-lysosomal acidic organelles within the DCs close to the cell membrane thus contributing to the viral infectious potential during DCs' migration from the periphery to the lymphoid tissues. On arrival at lymphoid tissues, intact virions recycle back to DCs' cell surface allowing virus transmission to CD4+ T-cells. Functionally, acts as a class I viral fusion protein. Under the current model, the protein has at least 3 conformational states: pre-fusion native state, pre-hairpin intermediate state, and post-fusion hairpin state. During fusion of viral and target intracellular membranes, the coiled coil regions (heptad repeats) assume a trimer-of-hairpins structure, positioning the fusion peptide in close proximity to the C-terminal region of the ectodomain. The formation of this structure appears to drive apposition and subsequent fusion of viral and target cell membranes. Complete fusion occurs in host cell endosomes and is dynamin-dependent, however some lipid transfer might occur at the plasma membrane. The virus undergoes clathrin-dependent internalization long before endosomal fusion, thus minimizing the surface exposure of conserved viral epitopes during fusion and reducing the efficacy of inhibitors targeting these epitopes. Membranes fusion leads to delivery of the nucleocapsid into the cytoplasm. The protein is Envelope glycoprotein gp160 of Human immunodeficiency virus type 1 group M subtype G (isolate 92NG083) (HIV-1).